Reading from the N-terminus, the 226-residue chain is MADAALKRGPGRGRFVTFEGGEGAGKSTQIKMLADRLEKDGVRVVLTREPGGSPGAEIMRHLVLSGMGKLLGAEAETLLFAAARDDHVRNVILPALNQGSWVLCDRFFDSTRAYQGSQGKVAPDVLNAMQRVTIGDLKPDLTLILDVPVEVGLQRASARRGSGAPDRFESEDIKFHKGLRDAFHKIAATEPRRCVLIDATASAEAVSNIVWDAVRERLFTAVAAAS.

20-27 (GGEGAGKS) is an ATP binding site.

Belongs to the thymidylate kinase family.

It carries out the reaction dTMP + ATP = dTDP + ADP. Functionally, phosphorylation of dTMP to form dTDP in both de novo and salvage pathways of dTTP synthesis. This Bradyrhizobium sp. (strain ORS 278) protein is Thymidylate kinase.